The following is a 340-amino-acid chain: Dihydroorotate dehydrogenase (quinone) (340 aa).

FMN is bound by residues 61 to 65 (AGLDK) and T85. K65 contributes to the substrate binding site. 110-114 (NRMGF) contacts substrate. FMN is bound by residues N138 and N171. A substrate-binding site is contributed by N171. S174 (nucleophile) is an active-site residue. N176 contacts substrate. Residues K216 and T244 each contribute to the FMN site. A substrate-binding site is contributed by 245–246 (NT). FMN is bound by residues G267, G296, and 317 to 318 (YT).

The protein belongs to the dihydroorotate dehydrogenase family. Type 2 subfamily. Monomer. It depends on FMN as a cofactor.

The protein localises to the cell membrane. The enzyme catalyses (S)-dihydroorotate + a quinone = orotate + a quinol. It participates in pyrimidine metabolism; UMP biosynthesis via de novo pathway; orotate from (S)-dihydroorotate (quinone route): step 1/1. Functionally, catalyzes the conversion of dihydroorotate to orotate with quinone as electron acceptor. The sequence is that of Dihydroorotate dehydrogenase (quinone) from Marinobacter nauticus (strain ATCC 700491 / DSM 11845 / VT8) (Marinobacter aquaeolei).